Reading from the N-terminus, the 266-residue chain is MLVCNYTQKRVDMMWDAIAYNDSRKYAFMTVNARWIHADRYFDTSAQLYSYIVQNKVSDVHVKPLDDGGGREWVVDADYKNYVDEHDLMLKIYIGATAFLLFYTEENVSRVMYTGNRGFHLWLKFTDKFKITSAQNVRVHRYKAFEKPAKLDSDYIQPGSFAHCVREAVRLYVPHMQDSNLDALTLQYWPDVDRDIFCNVNKQIRAPYSYNYKGTKFSRCITKELLDKLKQCYPGYGTGGCGPVTTTTTPSPPKIGSMQTTTKSTT.

Positions 244–266 (VTTTTTPSPPKIGSMQTTTKSTT) are disordered. Residues 257-266 (SMQTTTKSTT) show a composition bias toward polar residues.

This sequence belongs to the baculoviridae LEF-1 family. Interacts with LEF-2.

Its function is as follows. Plays an essential role in viral DNA replication. May generates single-stranded DNA for both leading and lagging strand synthesis. The primase initiates primer synthesis and thereby produces large amount of short RNA primers on the lagging strand that the polymerase elongates using dNTPs. In Autographa californica nuclear polyhedrosis virus (AcMNPV), this protein is DNA primase (LEF-1).